We begin with the raw amino-acid sequence, 354 residues long: Isopentenyl-diphosphate delta-isomerase (354 aa).

11-12 (KK) lines the substrate pocket. FMN is bound by residues serine 67, 68-70 (SMT), serine 98, and asparagine 126. 98-100 (SFK) is a substrate binding site. Glutamine 160 lines the substrate pocket. Residue glutamate 161 coordinates Mg(2+). FMN is bound by residues lysine 192, threonine 222, and 289–290 (AA).

It belongs to the IPP isomerase type 2 family. Homooctamer. Dimer of tetramers. FMN serves as cofactor. Requires NADPH as cofactor. The cofactor is Mg(2+).

It is found in the cytoplasm. It carries out the reaction isopentenyl diphosphate = dimethylallyl diphosphate. Functionally, involved in the biosynthesis of isoprenoids. Catalyzes the 1,3-allylic rearrangement of the homoallylic substrate isopentenyl (IPP) to its allylic isomer, dimethylallyl diphosphate (DMAPP). This is Isopentenyl-diphosphate delta-isomerase from Borreliella afzelii (strain PKo) (Borrelia afzelii).